A 436-amino-acid polypeptide reads, in one-letter code: Histidine--tRNA ligase (436 aa).

Belongs to the class-II aminoacyl-tRNA synthetase family. In terms of assembly, homodimer.

The protein resides in the cytoplasm. It carries out the reaction tRNA(His) + L-histidine + ATP = L-histidyl-tRNA(His) + AMP + diphosphate + H(+). The chain is Histidine--tRNA ligase from Prochlorococcus marinus (strain MIT 9313).